The sequence spans 201 residues: MELVMKDAECALTVSETTFGRDFNEALVHQVVVAYAAGARQGTRAQKSRAEVKASRKKPWRQKGTGRARAGSVKSPIWRSGGITFAAKPQDHSQKVNKKMYQGALKSILSELVRQNRLIVVETFSVEKPKTKLLIQKLKEMSLRDVLIVTEEVDENLFLAARNLYKVDVRDAAGIDPVSLISFDKVVMTGNAVKQLEEMLA.

The disordered stretch occupies residues 44–73; that stretch reads RAQKSRAEVKASRKKPWRQKGTGRARAGSV. The segment covering 55-66 has biased composition (basic residues); it reads SRKKPWRQKGTG.

It belongs to the universal ribosomal protein uL4 family. As to quaternary structure, part of the 50S ribosomal subunit.

One of the primary rRNA binding proteins, this protein initially binds near the 5'-end of the 23S rRNA. It is important during the early stages of 50S assembly. It makes multiple contacts with different domains of the 23S rRNA in the assembled 50S subunit and ribosome. Functionally, forms part of the polypeptide exit tunnel. This chain is Large ribosomal subunit protein uL4, found in Hamiltonella defensa subsp. Acyrthosiphon pisum (strain 5AT).